We begin with the raw amino-acid sequence, 165 residues long: Small ribosomal subunit protein uS5 (165 aa).

The region spanning 13–76 (LEEKVLVVNR…EAARKNLITI (64 aa)) is the S5 DRBM domain.

The protein belongs to the universal ribosomal protein uS5 family. As to quaternary structure, part of the 30S ribosomal subunit. Contacts proteins S4 and S8.

Functionally, with S4 and S12 plays an important role in translational accuracy. In terms of biological role, located at the back of the 30S subunit body where it stabilizes the conformation of the head with respect to the body. This is Small ribosomal subunit protein uS5 from Chlamydia felis (strain Fe/C-56) (Chlamydophila felis).